The following is a 308-amino-acid chain: Ribosomal RNA small subunit methyltransferase H (308 aa).

Residues 36 to 38 (GGH), Asp55, Phe86, Asp103, and Gln110 each bind S-adenosyl-L-methionine.

Belongs to the methyltransferase superfamily. RsmH family.

The protein resides in the cytoplasm. The enzyme catalyses cytidine(1402) in 16S rRNA + S-adenosyl-L-methionine = N(4)-methylcytidine(1402) in 16S rRNA + S-adenosyl-L-homocysteine + H(+). Its function is as follows. Specifically methylates the N4 position of cytidine in position 1402 (C1402) of 16S rRNA. The chain is Ribosomal RNA small subunit methyltransferase H from Helicobacter pylori (strain Shi470).